We begin with the raw amino-acid sequence, 157 residues long: MLTHLDSQGRAHMVDVTDKSVTFREAVAEARVRMLPETLKMIVDGAHPKGDVFAVARIAGIQAAKKTSDLIPLCHPLMLTGVKVELSADGADSVHIVARCKLSGQTGVEMEALTAASVAALTIYDMCKAVDRGMTIESIRLLEKLGGKSGHFKADQA.

Residues 73–75 (LCH) and 110–111 (ME) each bind substrate. Aspartate 125 is a catalytic residue.

Belongs to the MoaC family. As to quaternary structure, homohexamer; trimer of dimers.

It catalyses the reaction (8S)-3',8-cyclo-7,8-dihydroguanosine 5'-triphosphate = cyclic pyranopterin phosphate + diphosphate. The protein operates within cofactor biosynthesis; molybdopterin biosynthesis. Functionally, catalyzes the conversion of (8S)-3',8-cyclo-7,8-dihydroguanosine 5'-triphosphate to cyclic pyranopterin monophosphate (cPMP). The chain is Cyclic pyranopterin monophosphate synthase from Pseudomonas fluorescens (strain SBW25).